Reading from the N-terminus, the 335-residue chain is S-adenosylmethionine decarboxylase proenzyme (335 aa).

Catalysis depends on residues Glu-12 and Glu-15. Ser-70 serves as the catalytic Schiff-base intermediate with substrate; via pyruvic acid. Residue Ser-70 is modified to Pyruvic acid (Ser); by autocatalysis. The active-site Proton donor; for catalytic activity is Cys-84. Catalysis depends on proton acceptor; for processing activity residues Ser-231 and His-245.

Belongs to the eukaryotic AdoMetDC family. It depends on pyruvate as a cofactor. Post-translationally, is synthesized initially as an inactive proenzyme. Formation of the active enzyme involves a self-maturation process in which the active site pyruvoyl group is generated from an internal serine residue via an autocatalytic post-translational modification. Two non-identical subunits are generated from the proenzyme in this reaction, and the pyruvate is formed at the N-terminus of the alpha chain, which is derived from the carboxyl end of the proenzyme. The post-translation cleavage follows an unusual pathway, termed non-hydrolytic serinolysis, in which the side chain hydroxyl group of the serine supplies its oxygen atom to form the C-terminus of the beta chain, while the remainder of the serine residue undergoes an oxidative deamination to produce ammonia and the pyruvoyl group blocking the N-terminus of the alpha chain.

The catalysed reaction is S-adenosyl-L-methionine + H(+) = S-adenosyl 3-(methylsulfanyl)propylamine + CO2. It participates in amine and polyamine biosynthesis; S-adenosylmethioninamine biosynthesis; S-adenosylmethioninamine from S-adenosyl-L-methionine: step 1/1. In terms of biological role, essential for biosynthesis of the polyamines spermidine and spermine. Promotes maintenance and self-renewal of embryonic stem cells, by maintaining spermine levels. In Xenopus laevis (African clawed frog), this protein is S-adenosylmethionine decarboxylase proenzyme (amd1).